The following is a 317-amino-acid chain: Melanocyte-stimulating hormone receptor (317 aa).

Over 1–37 (MSVQGPQRRLLGSVNSTSPAAPRLGLAANQTGPRCLE) the chain is Extracellular. N-linked (GlcNAc...) asparagine glycosylation is found at Asn-15 and Asn-29. The chain crosses the membrane as a helical span at residues 38–63 (VSVPDGLFLSLGLVSVVENVLVVAAI). Topologically, residues 64–72 (AKNRNLHSP) are cytoplasmic. A helical transmembrane segment spans residues 73 to 93 (MYYFICCLAVSDLLVSVSSVL). The Extracellular segment spans residues 94-118 (ETAVMLLLEAGTLAGRAAVVQQLDD). Residues 119–140 (IIDVLVCGAMVSSLCFLGAIAV) traverse the membrane as a helical segment. The Cytoplasmic portion of the chain corresponds to 141–163 (DRYISIFYALRYHSIVTLPRAWR). A helical transmembrane segment spans residues 164-183 (AISAIWVASVLSSTLFIAYY). At 184 to 191 (DHTAVLLC) the chain is on the extracellular side. Residues 192–211 (LVSFFVAMLVLMAVLYVHML) traverse the membrane as a helical segment. Residues 212–240 (ARACQHARGIARLHKRQRPVHQGLGLKGA) are Cytoplasmic-facing. Residues 241–266 (ATLTILLGIFFLCWGPFFLHLSLMVL) form a helical membrane-spanning segment. Residues 267–279 (CPRHPICGCVFKN) are Extracellular-facing. Residues 280–300 (FNLFLTLIICNSIVDPLIYAF) traverse the membrane as a helical segment. The Cytoplasmic portion of the chain corresponds to 301–317 (RSQELRKTLREVLLCSW). Residue Cys-315 is the site of S-palmitoyl cysteine attachment.

Belongs to the G-protein coupled receptor 1 family. In terms of assembly, interacts with MGRN1, but does not undergo MGRN1-mediated ubiquitination; this interaction competes with GNAS-binding and thus inhibits agonist-induced cAMP production. Interacts with OPN3; the interaction results in a decrease in MC1R-mediated cAMP signaling and ultimately a decrease in melanin production in melanocytes.

It is found in the cell membrane. Receptor for MSH (alpha, beta and gamma) and ACTH. The activity of this receptor is mediated by G proteins which activate adenylate cyclase. Mediates melanogenesis, the production of eumelanin (black/brown) and phaeomelanin (red/yellow), via regulation of cAMP signaling in melanocytes. The chain is Melanocyte-stimulating hormone receptor (MC1R) from Puma yagouaroundi (Jaguarundi).